Here is a 109-residue protein sequence, read N- to C-terminus: Aquaporin-2 (109 aa).

The Cytoplasmic portion of the chain corresponds to 1–6 (SIAFSK). A helical membrane pass occupies residues 7–27 (AVFSEFLATLLFVFFGLGSAL). Topologically, residues 28–35 (NWPQALPS) are extracellular. The chain crosses the membrane as a helical span at residues 36–54 (GLQIAMAFGLAIGTLVQTL). At 55 to 59 (GHISG) the chain is on the cytoplasmic side. The discontinuously helical intramembrane region spans 60–69 (AHINPAVTVA). The NPA 1 motif lies at 63–65 (NPA). The Cytoplasmic segment spans residues 70-80 (CLVGCHVSFLR). Residues 81–102 (AIFYVAAQLLGAVAGAALLHEL) form a helical membrane-spanning segment. At 103–109 (TPPDIRG) the chain is on the extracellular side.

Belongs to the MIP/aquaporin (TC 1.A.8) family. As to quaternary structure, homotetramer. Serine phosphorylation is necessary and sufficient for expression at the apical membrane. Endocytosis is not phosphorylation-dependent. Post-translationally, N-glycosylated.

It is found in the apical cell membrane. The protein localises to the basolateral cell membrane. Its subcellular location is the cell membrane. The protein resides in the cytoplasmic vesicle membrane. It localises to the golgi apparatus. It is found in the trans-Golgi network membrane. The catalysed reaction is H2O(in) = H2O(out). It carries out the reaction glycerol(in) = glycerol(out). Functionally, forms a water-specific channel that provides the plasma membranes of renal collecting duct with high permeability to water, thereby permitting water to move in the direction of an osmotic gradient. Plays an essential role in renal water homeostasis. Could also be permeable to glycerol. The chain is Aquaporin-2 from Orycteropus afer (Aardvark).